We begin with the raw amino-acid sequence, 41 residues long: Large ribosomal subunit protein bL36 (41 aa).

This sequence belongs to the bacterial ribosomal protein bL36 family.

This chain is Large ribosomal subunit protein bL36 (rpmJ), found in Agrobacterium fabrum (strain C58 / ATCC 33970) (Agrobacterium tumefaciens (strain C58)).